A 310-amino-acid chain; its full sequence is uncharacterized protein (310 aa).

The active site involves His239.

The protein belongs to the IUNH family.

The protein localises to the cytoplasm. Its subcellular location is the nucleus. This is an uncharacterized protein from Schizosaccharomyces pombe (strain 972 / ATCC 24843) (Fission yeast).